A 523-amino-acid chain; its full sequence is Cytochrome P450 monooxygenase bsc5 (523 aa).

A helical membrane pass occupies residues M16–P36. N178, N281, and N403 each carry an N-linked (GlcNAc...) asparagine glycan. C459 contacts heme.

The protein belongs to the cytochrome P450 family. It depends on heme as a cofactor.

It is found in the membrane. It participates in mycotoxin biosynthesis. Its function is as follows. Cytochrome P450 monooxygenase; part of the gene cluster that mediates the biosynthesis of the diterpene glucoside brassicicene C. In the first step of the brassicicene C biosynthesis, the bifunctional diterpene synthase bsc8 that possesses both prenyl transferase and terpene cyclase activity, converts isopentenyl diphosphate and dimethylallyl diphosphate into geranylgeranyl diphosphate (GGDP) that is further converted into fusicocca-2,10(14)-diene, the first precursor for brassicicene C. Fusicocca-2,10(14)-diene is then substrate of cytochrome P450 monooxygenase bsc1 for hydroxylation at the C-8 position. Oxidation at C-16 position to aldehyde is then catalyzed by the cytochrome P450 monooyxygenase bsc7, yielding fusicocca-2,10(14)-diene-8-beta,16-diol. Follows the isomerization of the double bond and reduction of aldehyde to alcohol catalyzed by the short-chain dehydrogenase/reductase bsc3 to yield the diol compound fusicocca-1,10(14)-diene-8 beta,16-diol. The next step is the oxidation at the C-3 position of fusicocca-2,10(14)-diene-8-beta,16-diol catalyzed by the alpha-ketoglutarate dependent dioxygenase bsc9, to produce a triol compound. Methylation of the hydroxy group at position 16 is performed by the methyltransferase bsc6. 16-O-methylation is followed by oxidation at the C-13 position to ketone and an alkyl shift of the methyl group leads to brassicicene C. Although the probable acetyltransferase bsc4 is included in the gene cluster, no acetylation reactions are necessary for brassicicene C biosynthesis. However, the fact that brassicicene E, which is a structurally related compound having an acetoxy group at position 12, was previously isolated from another strain of A.brassicicola suggests that the ATCC 96836 strain might also produce a small amount of brassicicene E. In Alternaria brassicicola (Dark leaf spot agent), this protein is Cytochrome P450 monooxygenase bsc5.